The primary structure comprises 312 residues: Acetyl-coenzyme A carboxylase carboxyl transferase subunit alpha (312 aa).

Positions 36-286 constitute a CoA carboxyltransferase C-terminal domain; sequence NLEKEISKTY…ADYVKKSLNE (251 aa).

The protein belongs to the AccA family. As to quaternary structure, acetyl-CoA carboxylase is a heterohexamer composed of biotin carboxyl carrier protein (AccB), biotin carboxylase (AccC) and two subunits each of ACCase subunit alpha (AccA) and ACCase subunit beta (AccD).

The protein localises to the cytoplasm. It catalyses the reaction N(6)-carboxybiotinyl-L-lysyl-[protein] + acetyl-CoA = N(6)-biotinyl-L-lysyl-[protein] + malonyl-CoA. Its pathway is lipid metabolism; malonyl-CoA biosynthesis; malonyl-CoA from acetyl-CoA: step 1/1. Component of the acetyl coenzyme A carboxylase (ACC) complex. First, biotin carboxylase catalyzes the carboxylation of biotin on its carrier protein (BCCP) and then the CO(2) group is transferred by the carboxyltransferase to acetyl-CoA to form malonyl-CoA. The sequence is that of Acetyl-coenzyme A carboxylase carboxyl transferase subunit alpha from Campylobacter jejuni (strain RM1221).